We begin with the raw amino-acid sequence, 449 residues long: Elongation factor 1-alpha (449 aa).

The 226-residue stretch at 5–230 (KVHINIVVIG…DQIQEPKRPS (226 aa)) folds into the tr-type G domain. The G1 stretch occupies residues 14-21 (GHVDSGKS). 14–21 (GHVDSGKS) serves as a coordination point for GTP. At Lys55 the chain carries N6,N6-dimethyllysine. The segment at 70 to 74 (GITID) is G2. Lys79 carries the N6,N6,N6-trimethyllysine modification. Residues 91–94 (DAPG) form a G3 region. GTP contacts are provided by residues 91–95 (DAPGH) and 153–156 (NKMD). Positions 153–156 (NKMD) are G4. Lys187 bears the N6,N6,N6-trimethyllysine mark. The segment at 194 to 196 (SGF) is G5. At Lys261 the chain carries N6-methyllysine. 5-glutamyl glycerylphosphorylethanolamine is present on Glu289. Lys306 is subject to N6,N6,N6-trimethyllysine. At Glu362 the chain carries 5-glutamyl glycerylphosphorylethanolamine. Lys396 carries the N6,N6,N6-trimethyllysine modification.

It belongs to the TRAFAC class translation factor GTPase superfamily. Classic translation factor GTPase family. EF-Tu/EF-1A subfamily.

It localises to the cytoplasm. Its function is as follows. This protein promotes the GTP-dependent binding of aminoacyl-tRNA to the A-site of ribosomes during protein biosynthesis. The chain is Elongation factor 1-alpha (EF1) from Manihot esculenta (Cassava).